Reading from the N-terminus, the 287-residue chain is HTH-type transcriptional regulator MurR (287 aa).

Residues 1 to 77 (MLYLAKMRNA…MALIEEHSVS (77 aa)) form the HTH rpiR-type domain. The H-T-H motif DNA-binding region spans 37–56 (SRNMAKQLEISQSSIVKFAQ). The region spanning 128–268 (VINLISKAPL…FVGMVQLNDV (141 aa)) is the SIS domain.

As to quaternary structure, homotetramer.

It participates in amino-sugar metabolism; N-acetylmuramate degradation [regulation]. Functionally, represses the expression of the murPQ operon involved in the uptake and degradation of N-acetylmuramic acid (MurNAc). Binds to two adjacent inverted repeats within the operator region. MurNAc 6-phosphate, the substrate of MurQ, is the specific inducer that weakens binding of MurR to the operator. The polypeptide is HTH-type transcriptional regulator MurR (Salmonella arizonae (strain ATCC BAA-731 / CDC346-86 / RSK2980)).